Consider the following 290-residue polypeptide: Zinc-finger homeodomain protein 2 (290 aa).

Residues 1 to 15 (MDFDDHDEGDGDEEM) are compositionally biased toward acidic residues. The interval 1-59 (MDFDDHDEGDGDEEMPPMPLSSGYDAPMQPGLGGGGGGVPKPGGGVGGGGGGGGGGGGG) is disordered. Residues 31 to 59 (GLGGGGGGVPKPGGGVGGGGGGGGGGGGG) show a composition bias toward gly residues. The ZF-HD dimerization-type; degenerate zinc-finger motif lies at 63–112 (YRECLKNHAVGIGGHAVDGCGEFMASGEEGSIDALRCAACGCHRNFHRKE). The segment at residues 226–289 (KKRFRTKFTQ…NNKHTLGKKA (64 aa)) is a DNA-binding region (homeobox).

In terms of assembly, homo- and heterodimer with other ZFHD proteins.

The protein resides in the nucleus. Functionally, putative transcription factor. The sequence is that of Zinc-finger homeodomain protein 2 (ZHD2) from Oryza sativa subsp. japonica (Rice).